Consider the following 74-residue polypeptide: Translation initiation factor IF-1 2 (74 aa).

Residues 1–73 (MTKNKNVIEV…TRGRIVFRYR (73 aa)) form the S1-like domain.

It belongs to the IF-1 family. As to quaternary structure, component of the 30S ribosomal translation pre-initiation complex which assembles on the 30S ribosome in the order IF-2 and IF-3, IF-1 and N-formylmethionyl-tRNA(fMet); mRNA recruitment can occur at any time during PIC assembly.

The protein resides in the cytoplasm. Functionally, one of the essential components for the initiation of protein synthesis. Stabilizes the binding of IF-2 and IF-3 on the 30S subunit to which N-formylmethionyl-tRNA(fMet) subsequently binds. Helps modulate mRNA selection, yielding the 30S pre-initiation complex (PIC). Upon addition of the 50S ribosomal subunit IF-1, IF-2 and IF-3 are released leaving the mature 70S translation initiation complex. This Streptomyces avermitilis (strain ATCC 31267 / DSM 46492 / JCM 5070 / NBRC 14893 / NCIMB 12804 / NRRL 8165 / MA-4680) protein is Translation initiation factor IF-1 2.